The primary structure comprises 557 residues: Probable transcription factor sol4 (557 aa).

Residues 26–186 (IQYFFEDINW…EREMRRRMFC (161 aa)) are fungal transcription factor domain. Residues 463 to 490 (SGTQTRSMPSTETLTYNSSSSTSYGDGH) form a disordered region. Positions 472–485 (STETLTYNSSSSTS) are enriched in low complexity.

The protein localises to the nucleus. Its function is as follows. Probable transcription factor that regulates the expression of the gene cluster that mediates the biosynthesis of the phytotoxin solanapyrone, a causal agent of early blight disease of potato and tomato. The chain is Probable transcription factor sol4 (sol4) from Alternaria solani.